We begin with the raw amino-acid sequence, 449 residues long: MKLSAVILAAGKGLRMRSDLPKVAHRVAGKPIILHVIQAVKEAGIEDIVVVVGHGREVVQEICSGEKIRFVLQEQQLGTGHALMQAEAVVAPEDTILVLAGDIPLIQATSLQQLMESHRQKQATATVLSVNMQNPSGYGRILRDQQGAFLRIIEEKDANDEEKKIKEINSGIYCFCARKVFSALHSTSTRNAQGEYYLTEALELLKNQQESIGIFLSDGEEDIYGINDRVQLAQAENILRQRKNRELMLSGVSLMDPASTFIDSDVLIGHDTIILPFTIIEGNSRLGERCEIGPGTRISDSIIGSEVKIESSRLIQASVADRCNIGPFAYLRPETTLLEGVKVGDFVEIKKSTIGTGSKIPHLSYVGDATIGQGVNVGAGTITCNYDGKNKYQTVLEDRVFIGSNTNLVAPVRIGENSITGAGSTISRDVPPHTLAVERAGQKHLPRKG.

Positions 1–229 (MKLSAVILAA…EEDIYGINDR (229 aa)) are pyrophosphorylase. UDP-N-acetyl-alpha-D-glucosamine-binding positions include 8-11 (LAAG), K22, Q73, and 78-79 (GT). D102 contacts Mg(2+). UDP-N-acetyl-alpha-D-glucosamine-binding residues include G139, E154, N169, and N227. N227 contacts Mg(2+). The interval 230–250 (VQLAQAENILRQRKNRELMLS) is linker. Residues 251–449 (GVSLMDPAST…AGQKHLPRKG (199 aa)) form an N-acetyltransferase region. R332 and K350 together coordinate UDP-N-acetyl-alpha-D-glucosamine. Residue H362 is the Proton acceptor of the active site. UDP-N-acetyl-alpha-D-glucosamine contacts are provided by Y365 and N376. Acetyl-CoA is bound by residues A379, 385-386 (NY), S404, A422, and R439.

This sequence in the N-terminal section; belongs to the N-acetylglucosamine-1-phosphate uridyltransferase family. The protein in the C-terminal section; belongs to the transferase hexapeptide repeat family. In terms of assembly, homotrimer. Requires Mg(2+) as cofactor.

It localises to the cytoplasm. The catalysed reaction is alpha-D-glucosamine 1-phosphate + acetyl-CoA = N-acetyl-alpha-D-glucosamine 1-phosphate + CoA + H(+). It catalyses the reaction N-acetyl-alpha-D-glucosamine 1-phosphate + UTP + H(+) = UDP-N-acetyl-alpha-D-glucosamine + diphosphate. The protein operates within nucleotide-sugar biosynthesis; UDP-N-acetyl-alpha-D-glucosamine biosynthesis; N-acetyl-alpha-D-glucosamine 1-phosphate from alpha-D-glucosamine 6-phosphate (route II): step 2/2. It participates in nucleotide-sugar biosynthesis; UDP-N-acetyl-alpha-D-glucosamine biosynthesis; UDP-N-acetyl-alpha-D-glucosamine from N-acetyl-alpha-D-glucosamine 1-phosphate: step 1/1. It functions in the pathway bacterial outer membrane biogenesis; LPS lipid A biosynthesis. Functionally, catalyzes the last two sequential reactions in the de novo biosynthetic pathway for UDP-N-acetylglucosamine (UDP-GlcNAc). The C-terminal domain catalyzes the transfer of acetyl group from acetyl coenzyme A to glucosamine-1-phosphate (GlcN-1-P) to produce N-acetylglucosamine-1-phosphate (GlcNAc-1-P), which is converted into UDP-GlcNAc by the transfer of uridine 5-monophosphate (from uridine 5-triphosphate), a reaction catalyzed by the N-terminal domain. The chain is Bifunctional protein GlmU from Syntrophomonas wolfei subsp. wolfei (strain DSM 2245B / Goettingen).